A 149-amino-acid polypeptide reads, in one-letter code: Transcriptional repressor NrdR (149 aa).

A zinc finger spans residues 3–34 (CPFCSTEETKVIDSRLVSEGYQVRRRRECGNC). Residues 49–139 (PKVIKNDGTR…VYLSFDDINQ (91 aa)) enclose the ATP-cone domain.

Belongs to the NrdR family. It depends on Zn(2+) as a cofactor.

Negatively regulates transcription of bacterial ribonucleotide reductase nrd genes and operons by binding to NrdR-boxes. This chain is Transcriptional repressor NrdR, found in Pasteurella multocida (strain Pm70).